The following is a 631-amino-acid chain: RING finger protein 112 (631 aa).

The RING-type zinc finger occupies 57–98; the sequence is CSICLERLREPISLDCGHDFCIRCFSTHRIPGCELPCCPECR. Residues 131 to 631 are interaction with ZBTB16; it reads AVRAERLLLV…GDREPLLQEE (501 aa). Positions 166 to 397 constitute a GB1/RHD3-type G domain; that stretch reads DTPVCLLAVL…YISDVLSTAP (232 aa). Position 317-318 (317-318) interacts with GTP; the sequence is RD. 2 helical membrane-spanning segments follow: residues 547–567 and 580–600; these read LAAVGGAVGAGLMGLAGGVVG and GMVAAGAAVGATGAAVVGGGV.

The protein belongs to the TRAFAC class dynamin-like GTPase superfamily. GB1/RHD3 GTPase family. GB1 subfamily. Self-associates. Interacts with SP1 in an oxidative stress-regulated manner. Interacts with SIGMAR1 in an oxidative stress-regulated manner. Interacts with ZBTB16 (via C2H2-type zinc finger domains 1 and 2). In terms of processing, auto-ubiquitinated. Predominantly expressed in brain.

Its subcellular location is the membrane. The protein localises to the cytoplasm. The protein resides in the nucleus. It is found in the nuclear body. It localises to the nucleoplasm. Its subcellular location is the endosome. The protein localises to the cytoplasmic vesicle. The protein resides in the secretory vesicle. It is found in the synaptic vesicle. It localises to the postsynaptic density. Its subcellular location is the perikaryon. The protein localises to the cell projection. The protein resides in the neuron projection. The enzyme catalyses S-ubiquitinyl-[E2 ubiquitin-conjugating enzyme]-L-cysteine + [acceptor protein]-L-lysine = [E2 ubiquitin-conjugating enzyme]-L-cysteine + N(6)-ubiquitinyl-[acceptor protein]-L-lysine.. Its pathway is protein modification; protein ubiquitination. In terms of biological role, E3 ubiquitin-protein ligase that plays an important role in neuronal differentiation, including neurogenesis and gliogenesis, during brain development. During embryonic development initiates neuronal differentiation by inducing cell cycle arrest at the G0/G1 phase through up-regulation of cell-cycle regulatory proteins. Plays a role not only in the fetal period during the development of the nervous system, but also in the adult brain, where it is involved in the maintenance of neural functions and protection of the nervous tissue cells from oxidative stress-induced damage. Exhibits GTPase and E3 ubiquitin-protein ligase activities. Regulates dendritic spine density and synaptic neurotransmission; its ability to hydrolyze GTP is involved in the maintenance of dendritic spine density. The polypeptide is RING finger protein 112 (Rnf112) (Rattus norvegicus (Rat)).